The sequence spans 234 residues: MTIHIGARPDQIAETVLMPGDPYRARWAAQTFLDGAELVNEVRGMLGFTGTYKGNRVTIQGSGMGMPSLSIYANELISSYNAQTLIRIGSCGGMQPHVAVRDVIIAMSATTITSPSSGIFREVNFAPTAHYDLLAAAVTAAKAKGTRTHVGGIYSSDVFYAERPDLDEQMVRHGILGVEMEAAELYTLAARHNRRALAILTVSDHLQTGEALPAEDREQTFGDMVEIALEAAFA.

Residue His4 coordinates a purine D-ribonucleoside. Phosphate-binding positions include Gly20, Arg24, Arg43, and 87 to 90 (RIGS). Residues Glu162, 179–181 (EME), and 203–204 (SD) contribute to the a purine D-ribonucleoside site. The active-site Proton donor is Asp204.

Belongs to the PNP/UDP phosphorylase family. In terms of assembly, homohexamer; trimer of homodimers.

The enzyme catalyses a purine D-ribonucleoside + phosphate = a purine nucleobase + alpha-D-ribose 1-phosphate. It carries out the reaction a purine 2'-deoxy-D-ribonucleoside + phosphate = a purine nucleobase + 2-deoxy-alpha-D-ribose 1-phosphate. Functionally, catalyzes the reversible phosphorolytic breakdown of the N-glycosidic bond in the beta-(deoxy)ribonucleoside molecules, with the formation of the corresponding free purine bases and pentose-1-phosphate. The chain is Purine nucleoside phosphorylase DeoD-type from Roseobacter denitrificans (strain ATCC 33942 / OCh 114) (Erythrobacter sp. (strain OCh 114)).